We begin with the raw amino-acid sequence, 627 residues long: 1-deoxy-D-xylulose-5-phosphate synthase (627 aa).

Thiamine diphosphate contacts are provided by residues histidine 87 and 128 to 130 (GHS). Aspartate 159 is a binding site for Mg(2+). Thiamine diphosphate contacts are provided by residues 160–161 (GA), asparagine 188, phenylalanine 295, and glutamate 375. Asparagine 188 is a binding site for Mg(2+).

It belongs to the transketolase family. DXPS subfamily. In terms of assembly, homodimer. Requires Mg(2+) as cofactor. The cofactor is thiamine diphosphate.

It catalyses the reaction D-glyceraldehyde 3-phosphate + pyruvate + H(+) = 1-deoxy-D-xylulose 5-phosphate + CO2. The protein operates within metabolic intermediate biosynthesis; 1-deoxy-D-xylulose 5-phosphate biosynthesis; 1-deoxy-D-xylulose 5-phosphate from D-glyceraldehyde 3-phosphate and pyruvate: step 1/1. Its function is as follows. Catalyzes the acyloin condensation reaction between C atoms 2 and 3 of pyruvate and glyceraldehyde 3-phosphate to yield 1-deoxy-D-xylulose-5-phosphate (DXP). The chain is 1-deoxy-D-xylulose-5-phosphate synthase from Pseudomonas aeruginosa (strain LESB58).